Reading from the N-terminus, the 139-residue chain is uncharacterized protein (139 aa).

Residues 3 to 110 (IFCNIVEGRD…VPTWSQDPDI (108 aa)) form the HIT domain. Positions 95–99 (HSHFH) match the Histidine triad motif motif.

This is an uncharacterized protein from Saccharolobus solfataricus (strain ATCC 35092 / DSM 1617 / JCM 11322 / P2) (Sulfolobus solfataricus).